Reading from the N-terminus, the 423-residue chain is Mannose-6-phosphate isomerase (423 aa).

Ala2 bears the N-acetylalanine mark. Residues Ser102 and Ser108 each carry the phosphoserine modification. Zn(2+)-binding residues include Gln110, His112, Glu137, and His276. Arg295 is a catalytic residue.

The protein belongs to the mannose-6-phosphate isomerase type 1 family. It depends on Zn(2+) as a cofactor.

Its subcellular location is the cytoplasm. It catalyses the reaction D-mannose 6-phosphate = D-fructose 6-phosphate. Its pathway is nucleotide-sugar biosynthesis; GDP-alpha-D-mannose biosynthesis; alpha-D-mannose 1-phosphate from D-fructose 6-phosphate: step 1/2. In terms of biological role, isomerase that catalyzes the interconversion of fructose-6-P and mannose-6-P and has a critical role in the supply of D-mannose derivatives required for many eukaryotic glycosylation reactions. This Pan troglodytes (Chimpanzee) protein is Mannose-6-phosphate isomerase (MPI).